Consider the following 832-residue polypeptide: Disintegrin and metalloproteinase domain-containing protein 23 (832 aa).

Positions 1–10 are enriched in polar residues; it reads MKPPGSSSRQ. A disordered region spans residues 1–37; it reads MKPPGSSSRQPPLAGCSLAGASCGPQRGPAGSVPASA. A signal peptide spans 1–59; that stretch reads MKPPGSSSRQPPLAGCSLAGASCGPQRGPAGSVPASAPARTPPCRLLLVLLLLPPLAAS. The segment covering 28 to 37 has biased composition (low complexity); the sequence is GPAGSVPASA. Positions 60 to 286 are excised as a propeptide; sequence SRPRAWGAAA…ELQWLKRRKR (227 aa). 4 N-linked (GlcNAc...) asparagine glycosylation sites follow: Asn76, Asn96, Asn100, and Asn263. Over 287–792 the chain is Extracellular; it reads AVNPSRGIFE…EGPKGPSATN (506 aa). Residues 299 to 496 form the Peptidase M12B domain; that stretch reads KYLELMIVND…GGGACLFNRP (198 aa). 3 disulfides stabilise this stretch: Cys408/Cys491, Cys450/Cys475, and Cys452/Cys459. In terms of domain architecture, Disintegrin spans 502-588; sequence PTECGNGYVE…QCPPNLHKQD (87 aa). Asn547 and Asn548 each carry an N-linked (GlcNAc...) asparagine glycan. Cys560 and Cys580 are oxidised to a cystine. The may bind the integrin receptor stretch occupies residues 563-568; the sequence is AVNECD. N-linked (GlcNAc...) asparagine glycans are attached at residues Asn664 and Asn732. The 38-residue stretch at 732–769 folds into the EGF-like domain; sequence NMSSCPLDSKGKVCSGHGVCSNEATCICDFTWAGTDCS. 3 cysteine pairs are disulfide-bonded: Cys736–Cys751, Cys745–Cys757, and Cys759–Cys768. A helical membrane pass occupies residues 793–813; sequence LIIGSIAGAILVAAIVLGGTG. Topologically, residues 814–832 are cytoplasmic; that stretch reads WGFKNVKKRRFDPTQQGPI.

Can bind to LGI1 and LGI4. Ligand for integrin alpha-V/beta-3. As to expression, highly expressed in the brain and weakly expressed in the heart. In the brain, expressed prominently in the amygdala, caudate nucleus, hypothalamus, thalamus, cerebral cortex and occipital pole.

It localises to the cell membrane. It is found in the secreted. Functionally, may play a role in cell-cell and cell-matrix interactions. This is a non-catalytic metalloprotease-like protein. In Homo sapiens (Human), this protein is Disintegrin and metalloproteinase domain-containing protein 23 (ADAM23).